Here is a 795-residue protein sequence, read N- to C-terminus: Phenylalanine--tRNA ligase beta subunit (795 aa).

A tRNA-binding domain is found at 39–148 (AGEFNGVVVG…ADAPVGKDFR (110 aa)). The region spanning 401-476 (PKLNKVQLRR…RIYGYNSIPN (76 aa)) is the B5 domain. Mg(2+) contacts are provided by D454, D460, E463, and E464. One can recognise an FDX-ACB domain in the interval 701 to 794 (SKFPANKRDL…LKDRFNAYLR (94 aa)).

The protein belongs to the phenylalanyl-tRNA synthetase beta subunit family. Type 1 subfamily. In terms of assembly, tetramer of two alpha and two beta subunits. It depends on Mg(2+) as a cofactor.

Its subcellular location is the cytoplasm. It carries out the reaction tRNA(Phe) + L-phenylalanine + ATP = L-phenylalanyl-tRNA(Phe) + AMP + diphosphate + H(+). This is Phenylalanine--tRNA ligase beta subunit from Mannheimia succiniciproducens (strain KCTC 0769BP / MBEL55E).